The primary structure comprises 267 residues: Hydroxynaphthalene reductase-like protein Arp2 (267 aa).

NADP(+) contacts are provided by Ile25, Asn45, Asp71, and Asn98. Catalysis depends on proton donor residues Ser147 and Ser148. Positions 162, 166, 195, and 197 each coordinate NADP(+). Tyr162 acts as the Proton acceptor in catalysis. Lys166 (lowers pKa of active site Tyr) is an active-site residue.

Belongs to the short-chain dehydrogenases/reductases (SDR) family.

Hydroxynaphthalene reductase-like protein; part of the Pks2 gene cluster that mediates the formation of infectious structures (appressoria), enabling these fungi to kill insects faster. The product of the Pks2 gene cluster is different from the one of Pks1 and has still not been identified. This Metarhizium brunneum (strain ARSEF 3297) protein is Hydroxynaphthalene reductase-like protein Arp2.